The primary structure comprises 512 residues: Histidine ammonia-lyase (512 aa).

The segment at residues Ala142–Gly144 is a cross-link (5-imidazolinone (Ala-Gly)). At Ser143 the chain carries 2,3-didehydroalanine (Ser).

It belongs to the PAL/histidase family. In terms of processing, contains an active site 4-methylidene-imidazol-5-one (MIO), which is formed autocatalytically by cyclization and dehydration of residues Ala-Ser-Gly.

The protein resides in the cytoplasm. The catalysed reaction is L-histidine = trans-urocanate + NH4(+). Its pathway is amino-acid degradation; L-histidine degradation into L-glutamate; N-formimidoyl-L-glutamate from L-histidine: step 1/3. This chain is Histidine ammonia-lyase, found in Bartonella quintana (strain Toulouse) (Rochalimaea quintana).